The primary structure comprises 643 residues: Zinc finger protein 23 (643 aa).

The region spanning 1-43 is the KRAB domain; it reads MLENYGNVASLGFPLLKPAVISQLEGGSELGGSSPLAAGTGLQ. Residue Lys157 forms a Glycyl lysine isopeptide (Lys-Gly) (interchain with G-Cter in SUMO2) linkage. Residues 168–190 form a C2H2-type 1; degenerate zinc finger; the sequence is FKCEELVEPFRCDSQLIQHQENN. C2H2-type zinc fingers lie at residues 196 to 218, 224 to 246, 252 to 274, 280 to 302, 308 to 330, 336 to 358, 364 to 386, 392 to 414, 420 to 442, 448 to 470, 476 to 498, 504 to 526, 532 to 554, 560 to 582, 588 to 610, and 616 to 638; these read YQCSECGKAFSINEKLIWHQRLH, FKCVECGKSFSYSSHYITHQTIH, YQCKMCGKAFSVNGSLSRHQRIH, YQCKECGNGFSCSSAYITHQRVH, YECNDCGKAFNVNAKLIQHQRIH, YECNECGKGFRCSSQLRQHQSIH, YQCKECGKGFNNNTKLIQHQRIH, YECTECGKAFSVKGKLIQHQRIH, YECNECGKAFRCNSQFRQHLRIH, YECNECGKAFSVNGKLMRHQRIH, FECNECGRCFTSKRNLLDHHRIH, YQCKECGKAFSINAKLTRHQRIH, FKCMECEKAFSCSSNYIVHQRIH, FQCKECGKAFHVNAHLIRHQRSH, FRCVECGKGFSFSSDYIIHQTVH, and YMCSVCGKAFRFSFQLSQHQSVH.

It belongs to the krueppel C2H2-type zinc-finger protein family.

The protein localises to the nucleus. In terms of biological role, may be involved in transcriptional regulation. May have a role in embryonic development. This chain is Zinc finger protein 23 (ZNF23), found in Homo sapiens (Human).